The sequence spans 1040 residues: Multidrug resistance protein MdtB (1040 aa).

12 helical membrane-spanning segments follow: residues 16-36, 342-362, 369-389, 396-416, 440-460, 472-492, 537-557, 869-889, 890-910, 911-931, 968-988, and 998-1018; these read FIMRPVATTLLMVAILIAGII, DTQFELMLAMALVVMIIYVFL, IIPAVAVPLSLVGTFAVMVFL, LTLMALTIATGFVVDDAIVVI, IGFTIISLTFSLIAVLIPLLF, FAVTLAVAILISAVVSLTLTP, WATLSVALGTLALSVMLWIVI, LIVAAVVAMYIVLGVLYESFI, HPVTILSTLPTAGVGALLALM, LSGSELDVIAIIGIILLIGIV, ILMTTMAALLGALPLMLSTGV, and IGMVGGLLVSQVLTLFTTPVI.

Belongs to the resistance-nodulation-cell division (RND) (TC 2.A.6) family. MdtB subfamily. Part of a tripartite efflux system composed of MdtA, MdtB and MdtC. MdtB forms a heteromultimer with MdtC.

It is found in the cell inner membrane. The polypeptide is Multidrug resistance protein MdtB (Enterobacter sp. (strain 638)).